A 172-amino-acid chain; its full sequence is MERAEKREFVTELNEVFKASGSVVVAHYAGVTVAQMNDFRSKMRAAGGTVKVAKNRLAKIALQGTESEGMTNLFKGQTLIAYSVDPMIAPKVVMDFAKTNDKVVVLGGSMGATTLNAEAVKSLATLPSLDELRAKLLGLLNAPATRVATVVAAPASQLARVFSAYAKKDEAA.

This sequence belongs to the universal ribosomal protein uL10 family. Part of the ribosomal stalk of the 50S ribosomal subunit. The N-terminus interacts with L11 and the large rRNA to form the base of the stalk. The C-terminus forms an elongated spine to which 3 L12 dimers bind in a sequential fashion forming a heptameric L10(L12)2(L12)2(L12)2 complex.

Functionally, forms part of the ribosomal stalk, playing a central role in the interaction of the ribosome with GTP-bound translation factors. The protein is Large ribosomal subunit protein uL10 of Agrobacterium fabrum (strain C58 / ATCC 33970) (Agrobacterium tumefaciens (strain C58)).